Consider the following 574-residue polypeptide: DNA polymerase alpha subunit B (574 aa).

This sequence belongs to the DNA polymerase alpha subunit B family. In terms of assembly, component of the alpha DNA polymerase complex (also known as the alpha DNA polymerase-primase complex) consisting of four subunits: the catalytic subunit pol1, the accessory subunit spb70/pol12, and the primase complex subunits spp1/pri1 and spp2/pri2 respectively. Interacts with orc1. Interacts with orc2; the interaction occurs on the chromatin, is stable thoughout the cell cycle and is independent from spb70 role in the alpha DNA polymerase complex. Post-translationally, phosphorylated in a cell cycle-dependent manner.

It localises to the nucleus. The protein resides in the chromosome. Accessory subunit of the DNA polymerase alpha complex (also known as the alpha DNA polymerase-primase complex) which plays an essential role in the initiation of DNA synthesis. During the S phase of the cell cycle, the DNA polymerase alpha complex (composed of a catalytic subunit pol1, an accessory subunit spb70/pol12 and two primase subunits, the catalytic subunit spp1/pri1 and the regulatory subunit spp2/pri2) is recruited to DNA at the replicative forks. The primase subunit of the polymerase alpha complex initiates DNA synthesis by oligomerising short RNA primers on both leading and lagging strands. This Schizosaccharomyces pombe (strain 972 / ATCC 24843) (Fission yeast) protein is DNA polymerase alpha subunit B.